The chain runs to 149 residues: MVFLTTRLWLRNRLTDRYWRVQEVLKHAQHFRGRKNRCYRLAVRAVTRAFVKCTKARRLKKRNLRTLWINRITAASQEHGLKYPAFIVNLIKCQVELNRKVLVDLAIYEPKTFKSLAALAKRRQQEGFAAALGDGKEPEGIFSRVVQYH.

Residues 1–9 constitute a mitochondrion transit peptide; sequence MVFLTTRLW.

The protein belongs to the bacterial ribosomal protein bL20 family. Component of the mitochondrial ribosome large subunit (39S) which comprises a 16S rRNA and about 50 distinct proteins. Interacts with OXA1L.

The protein localises to the mitochondrion. This is Large ribosomal subunit protein bL20m (Mrpl20) from Mus musculus (Mouse).